Reading from the N-terminus, the 473-residue chain is uncharacterized protein (473 aa).

A signal peptide spans 1 to 19 (MIRAFLVFPYLYILVQSNG).

This is an uncharacterized protein from Methanocaldococcus jannaschii (strain ATCC 43067 / DSM 2661 / JAL-1 / JCM 10045 / NBRC 100440) (Methanococcus jannaschii).